We begin with the raw amino-acid sequence, 437 residues long: Argininosuccinate lyase (437 aa).

Belongs to the lyase 1 family. Argininosuccinate lyase subfamily.

It localises to the cytoplasm. The catalysed reaction is 2-(N(omega)-L-arginino)succinate = fumarate + L-arginine. The protein operates within amino-acid biosynthesis; L-arginine biosynthesis; L-arginine from L-ornithine and carbamoyl phosphate: step 3/3. The sequence is that of Argininosuccinate lyase from Clostridium novyi (strain NT).